The chain runs to 379 residues: Putative acetyl-CoA C-acetyltransferase VraB (379 aa).

Residue cysteine 86 is the Acyl-thioester intermediate of the active site. Residue histidine 338 is the Proton acceptor of the active site.

The protein belongs to the thiolase-like superfamily. Thiolase family.

In Staphylococcus aureus (strain Mu3 / ATCC 700698), this protein is Putative acetyl-CoA C-acetyltransferase VraB (vraB).